We begin with the raw amino-acid sequence, 140 residues long: Actin-depolymerizing factor 10 (140 aa).

Position 6 is a phosphoserine (serine 6). The ADF-H domain occupies 7-139 (GMHVSDECKL…SLDIIKGRVN (133 aa)).

This sequence belongs to the actin-binding proteins ADF family.

Its subcellular location is the cytoplasm. It is found in the cytoskeleton. Its function is as follows. Actin-depolymerizing protein. Severs actin filaments (F-actin) and binds to actin monomers. This is Actin-depolymerizing factor 10 (ADF10) from Arabidopsis thaliana (Mouse-ear cress).